The following is a 450-amino-acid chain: C4-dicarboxylate transport protein (450 aa).

Transmembrane regions (helical) follow at residues 10–30 (SLYFQVIVAIVIGILIGHFYP), 46–66 (LIKMVIAPIIFCTVVSGIAGM), 78–98 (YALLYFEIVSTIALLIGLIVV), 143–163 (IVGAFANGDILQVLMFSVIFG), 190–210 (IINMIMKLAPLGAFGAMAFTI), 224–244 (LMICFYITCALFVVFVLGAIA), 291–311 (VVGLVIPTGYSFNLDGTSIYL), 332–352 (ITLLLVLLLSSKGAAGVTGSG), and 354–374 (IVLAATLSAVGHLPVAGLALI). Residues 428–450 (PEDDLGVAEGPTPGAAVNTTKTV) form a disordered region.

Belongs to the dicarboxylate/amino acid:cation symporter (DAACS) (TC 2.A.23) family.

The protein resides in the cell inner membrane. Responsible for the transport of dicarboxylates such as succinate, fumarate, and malate from the periplasm across the membrane. The sequence is that of C4-dicarboxylate transport protein from Pseudomonas syringae pv. syringae (strain B728a).